The following is a 992-amino-acid chain: Ribosome quality control complex subunit NEMF homolog (992 aa).

Residues 214–231 are compositionally biased toward basic and acidic residues; that stretch reads KETTEETPEAEDKPEKGG. The interval 214–245 is disordered; sequence KETTEETPEAEDKPEKGGKKQRKKQQNTKLEQ. Coiled-coil stretches lie at residues 331–370 and 481–514; these read STQE…LTKV and SAAQ…VRTI. Disordered stretches follow at residues 688-715 and 771-895; these read EVEH…NTEI and GPSR…GDVD. Residues 702-715 show a composition bias toward polar residues; that stretch reads SNINLSEPSSNTEI. Residues 774-839 adopt a coiled-coil conformation; that stretch reads RKKQVSAKKT…QDDEEREIRM (66 aa). A compositionally biased stretch (basic and acidic residues) spans 782–796; the sequence is KTKEDKARAKQEAAK. A compositionally biased stretch (basic residues) spans 814 to 825; it reads RGQKGKLKKMKQ. Residues 845–874 are compositionally biased toward basic and acidic residues; the sequence is SGKEKPQASADKVVEKSESTKEYVKPEKSA.

It belongs to the NEMF family. In terms of assembly, component of the ribosome quality control complex (RQC), composed of at least the E3 ubiquitin ligase l(3)76BDr/LTN1 and Clbn/NEMF associated with the 60S ribosomal subunit. The complex probably also contains TCF25 as well as TER94/VCP and its ubiquitin-binding cofactors. Interacts (via its C-terminus) with pros (via its homeobox). Interacts (via its N-terminus) with emb. Expressed in enterocytes (at protein level).

The protein resides in the nucleus. It localises to the cytoplasm. The protein localises to the mitochondrion outer membrane. Functionally, key component of the ribosome quality control complex (RQC), a ribosome-associated complex that mediates the extraction of incompletely synthesized nascent chains from stalled ribosomes as well as their ubiquitin-mediated proteasomal degradation. Thereby, frees 60S subunit ribosomes from the stalled translation complex and prevents the accumulation of nascent polypeptide chains that are potentially toxic for the cell. Within the RQC complex, Clbn/NEMF specifically binds stalled 60S ribosomal subunits by recognizing an exposed, nascent chain-conjugated tRNA moiety. Following binding to stalled 60S ribosomal subunits, Clbn/NEMF mediates CAT tailing by recruiting alanine-charged tRNA to the A-site and directing the elongation of stalled nascent chains independently of mRNA or 40S subunits, leading to non-templated C-terminal alanine extensions (CAT tails). On mitochondrial surface, plays a role in mitochondrial-stress induced translational termination impairment and protein carboxyl terminal extension (MISTERMINATE). Plays a role in regulating nuclear transport possibly through directly binding to both emb and cargo proteins. Plays a role in the regulation of G1-to-S cell cycle transition. Regulates S phase checkpoint by antagonizing E2F1 activity. Together with hid and tefu/ATM, plays a role in DNA damage-induced apoptosis through both p53-dependent and -independent activity. Plays an essential role in the regulation of mitochondrial structure and redox state in enterocytes which is essential for the control of intestinal stem cells proliferation and intestinal homeostasis. The polypeptide is Ribosome quality control complex subunit NEMF homolog (Drosophila melanogaster (Fruit fly)).